Here is a 71-residue protein sequence, read N- to C-terminus: Exodeoxyribonuclease 7 small subunit (71 aa).

Belongs to the XseB family. As to quaternary structure, heterooligomer composed of large and small subunits.

It is found in the cytoplasm. It catalyses the reaction Exonucleolytic cleavage in either 5'- to 3'- or 3'- to 5'-direction to yield nucleoside 5'-phosphates.. Bidirectionally degrades single-stranded DNA into large acid-insoluble oligonucleotides, which are then degraded further into small acid-soluble oligonucleotides. This Clostridium botulinum (strain Kyoto / Type A2) protein is Exodeoxyribonuclease 7 small subunit.